The primary structure comprises 60 residues: Large ribosomal subunit protein bL32 (60 aa).

A disordered region spans residues M1 to E60. Over residues R49–E60 the composition is skewed to basic residues.

Belongs to the bacterial ribosomal protein bL32 family.

This Herminiimonas arsenicoxydans protein is Large ribosomal subunit protein bL32.